Reading from the N-terminus, the 319-residue chain is Protein sprouty homolog 1 (319 aa).

Methionine 1 bears the N-acetylmethionine mark. The disordered stretch occupies residues 54–157; sequence TEGPSVVKRP…HRSERAIRTQ (104 aa). Positions 69 to 79 are enriched in basic and acidic residues; sequence PRQEKHERTHE. A compositionally biased stretch (low complexity) spans 112–131; the sequence is SRSTSTGSAASSGSNSSASS. In terms of domain architecture, SPR spans 183 to 295; the sequence is QCGKCKCGEC…CYDWIHRPGC (113 aa).

This sequence belongs to the sprouty family. In terms of assembly, forms heterodimers with SPRY2. Interacts with TESK1. Interacts with CAV1 (via C-terminus).

Its subcellular location is the cytoplasm. The protein resides in the membrane. Inhibits fibroblast growth factor (FGF)-induced retinal lens fiber differentiation, probably by inhibiting FGF-mediated phosphorylation of ERK1/2. Inhibits TGFB-induced epithelial-to-mesenchymal transition in lens epithelial cells. This Bos taurus (Bovine) protein is Protein sprouty homolog 1 (SPRY1).